The chain runs to 557 residues: Probable transcription factor sol4 (557 aa).

The interval 26 to 186 (IQYFFEDINW…EREMRRRMFC (161 aa)) is fungal transcription factor domain. The interval 463-490 (SGTQTRSMPSTETLTYNSSSSTSYGDGH) is disordered. The segment covering 472 to 485 (STETLTYNSSSSTS) has biased composition (low complexity).

Its subcellular location is the nucleus. Functionally, probable transcription factor that regulates the expression of the gene cluster that mediates the biosynthesis of the phytotoxin solanapyrone, a causal agent of early blight disease of potato and tomato. The protein is Probable transcription factor sol4 (sol4) of Alternaria solani.